The chain runs to 222 residues: 7-cyano-7-deazaguanine synthase (222 aa).

7–17 (LSGGLDSSTVL) provides a ligand contact to ATP. C191, C199, C202, and C205 together coordinate Zn(2+).

This sequence belongs to the QueC family. Zn(2+) is required as a cofactor.

It catalyses the reaction 7-carboxy-7-deazaguanine + NH4(+) + ATP = 7-cyano-7-deazaguanine + ADP + phosphate + H2O + H(+). The protein operates within purine metabolism; 7-cyano-7-deazaguanine biosynthesis. Catalyzes the ATP-dependent conversion of 7-carboxy-7-deazaguanine (CDG) to 7-cyano-7-deazaguanine (preQ(0)). In Trichodesmium erythraeum (strain IMS101), this protein is 7-cyano-7-deazaguanine synthase.